Here is a 141-residue protein sequence, read N- to C-terminus: Large ribosomal subunit protein uL22 (141 aa).

The protein belongs to the universal ribosomal protein uL22 family. In terms of assembly, part of the 50S ribosomal subunit.

This protein binds specifically to 23S rRNA; its binding is stimulated by other ribosomal proteins, e.g. L4, L17, and L20. It is important during the early stages of 50S assembly. It makes multiple contacts with different domains of the 23S rRNA in the assembled 50S subunit and ribosome. Its function is as follows. The globular domain of the protein is located near the polypeptide exit tunnel on the outside of the subunit, while an extended beta-hairpin is found that lines the wall of the exit tunnel in the center of the 70S ribosome. This Frankia alni (strain DSM 45986 / CECT 9034 / ACN14a) protein is Large ribosomal subunit protein uL22.